The sequence spans 388 residues: Processive diacylglycerol beta-glucosyltransferase (388 aa).

The protein belongs to the glycosyltransferase 28 family. UgtP subfamily.

It is found in the cell membrane. The enzyme catalyses a 1,2-diacyl-3-O-(beta-D-glucopyranosyl)-sn-glycerol + UDP-alpha-D-glucose = a 1,2-diacyl-3-O-(beta-D-Glc-(1-&gt;6)-beta-D-Glc)-sn-glycerol + UDP + H(+). It carries out the reaction a 1,2-diacyl-3-O-(beta-D-Glc-(1-&gt;6)-beta-D-Glc)-sn-glycerol + UDP-alpha-D-glucose = a 1,2-diacyl-3-O-(beta-D-Glc-(1-&gt;6)-beta-D-Glc-(1-&gt;6)-beta-D-Glc)-sn-glycerol + UDP + H(+). It catalyses the reaction a 1,2-diacyl-sn-glycerol + UDP-alpha-D-glucose = a 1,2-diacyl-3-O-(beta-D-glucopyranosyl)-sn-glycerol + UDP + H(+). It participates in glycolipid metabolism; diglucosyl-diacylglycerol biosynthesis. Functionally, processive glucosyltransferase involved in the biosynthesis of both the bilayer- and non-bilayer-forming membrane glucolipids. Is able to successively transfer up to three glucosyl residues to diacylglycerol (DAG), thereby catalyzing the formation of beta-monoglucosyl-DAG (3-O-(beta-D-glucopyranosyl)-1,2-diacyl-sn-glycerol), beta-diglucosyl-DAG (3-O-(beta-D-glucopyranosyl-beta-(1-&gt;6)-D-glucopyranosyl)-1,2-diacyl-sn-glycerol) and beta-triglucosyl-DAG (3-O-(beta-D-glucopyranosyl-beta-(1-&gt;6)-D-glucopyranosyl-beta-(1-&gt;6)-D-glucopyranosyl)-1,2-diacyl-sn-glycerol). Beta-diglucosyl-DAG is the predominant glycolipid found in Bacillales and is also used as a membrane anchor for lipoteichoic acid (LTA). The protein is Processive diacylglycerol beta-glucosyltransferase of Bacillus cytotoxicus (strain DSM 22905 / CIP 110041 / 391-98 / NVH 391-98).